The primary structure comprises 2824 residues: Highly reducing polyketide synthase stpks1 (2824 aa).

One can recognise a Ketosynthase family 3 (KS3) domain in the interval 8-428; it reads PKPVAVVGIS…GANGHVIAES (421 aa). Active-site for beta-ketoacyl synthase activity residues include C177, H312, and H348. The segment at 517-854 is malonyl-CoA:ACP transacylase (MAT) domain; sequence QLVFVFSGQG…LTAVGNLSTL (338 aa). Residue S616 is the For malonyltransferase activity of the active site. The segment at 886–1004 is N-terminal hotdog fold; the sequence is MPFYSESSEL…GFMTTEVMDK (119 aa). Residues 886–1168 enclose the PKS/mFAS DH domain; the sequence is MPFYSESSEL…SKHWTGAVPT (283 aa). The dehydratase (DH) domain stretch occupies residues 894 to 1083; that stretch reads ELAVKMKRSR…PSLLDSCIHG (190 aa). H925 functions as the Proton acceptor; for dehydratase activity in the catalytic mechanism. The interval 1018–1168 is C-terminal hotdog fold; the sequence is TTPADISNLY…SKHWTGAVPT (151 aa). The active-site Proton donor; for dehydratase activity is the D1078. The methyltransferase (CMet) domain stretch occupies residues 1101–1449; it reads PSHIGRVTLY…KFQVVDGAQD (349 aa). Residues 1213-1232 form a disordered region; that stretch reads APPSANGHANGHANGSANGS. The tract at residues 1518-1840 is enoyl reductase (ER) domain; that stretch reads TGTFDGAVAT…LPSDFSVSQS (323 aa). The interval 1842–2096 is ketoreductase (KR) domain; that stretch reads ALADDKTYLV…SESVLYNHLV (255 aa). Residues 2109–2196 form the Carrier domain; sequence DPYEVLQEIV…TAVSTAEKPF (88 aa). The segment at 2200–2414 is thioesterase (TE) domain; the sequence is AMHQPGQTIL…WASSDATTRM (215 aa). The methyltransferase (CMet) domain stretch occupies residues 2608–2809; sequence YRQNKVFTSM…ATGYSNVQVC (202 aa).

Its pathway is mycotoxin biosynthesis. In terms of biological role, highly reducing polyketide synthase; part of the gene cluster that mediates the biosynthesis of strobilurin A, an antifungal polyketide that contains a key beta-methoxyacrylate toxophore that targets the complex III of the mitochondrial electron transport chain. Strobilurin biosynthesis begins with construction of benzoyl CoA by step-wise elimination of ammonia from phenylalanine by the phenylalanine ammonia-lyase str11, oxygenation by str8 and retro-Claisen reaction to form benzoic acid, which is activated to its CoA thiolester benzoyl CoA by the dedicated CoA ligase str10. Benzoyl CoA forms the starter unit for the highly reducing polyketide synthase stpks1 that produces the polyketide prestrobilutin A. The FAD-dependent oxygenase str9 then catalyzes the key oxidative rearrangement responsible for the creation of the beta-methoxyacrylate toxophore. Str9 performs epoxidation of the 2,3 olefin of prestrobilutin A, followed by Meinwald rearrangement to furnish the aldehyde intermediate. Rapid enolization of the aldehyde intermediate would give the beta-methoxyacrylate skeleton and methylations catalyzed by str2 and str3 complete the synthesis and lead to the production of strobilurin A. The short-chain dehydrogenase stl2 and the dehydrogenase str4 play a role in the shunt pathway leading to the production of bolineol. The cluster encodes no obvious halogenase gene that could be involved in production of strobilurin B, nor any obvious dimethylallyl-transferase that could be involved in the production of strobilurin G. It is possible that unknown proteins encoded in, or near, the cluster (such as str1 or stl1) may form new classes of halogenases or dimethylally-transferases, or that the responsible genes are located elsewhere on the genome. Similarly, proteins encoded by str5/str6 hydrolases appear to have no chemical role in the biosynthesis of strobilurin A. Finally, no obvious self-resistance gene is found within the cluster. This chain is Highly reducing polyketide synthase stpks1, found in Strobilurus tenacellus.